A 94-amino-acid chain; its full sequence is Integration host factor subunit beta (94 aa).

Belongs to the bacterial histone-like protein family. As to quaternary structure, heterodimer of an alpha and a beta chain.

This protein is one of the two subunits of integration host factor, a specific DNA-binding protein that functions in genetic recombination as well as in transcriptional and translational control. The polypeptide is Integration host factor subunit beta (Azorhizobium caulinodans (strain ATCC 43989 / DSM 5975 / JCM 20966 / LMG 6465 / NBRC 14845 / NCIMB 13405 / ORS 571)).